A 513-amino-acid chain; its full sequence is Probable metalloreductase AIM14 (513 aa).

7 consecutive transmembrane segments (helical) span residues 22–42 (GYIIFGVSVLYALLLASAHFL), 66–86 (PFWVHTLLWAAIVVGLAFTNV), 103–123 (LAFCLVPLDLALALRPCLLGQ), 138–158 (LIILAGVVHGIGFFVKWTIHH), 166–186 (WANLAGIIVALFSVLLVIVSS), 193–213 (FYSYFYAFHNFTVALFVLLMI), and 219–239 (GVSDFVLLSVALLLFQGASRV). The region spanning 100-211 (LGRLAFCLVP…NFTVALFVLL (112 aa)) is the Ferric oxidoreductase domain. One can recognise an FAD-binding FR-type domain in the interval 240–368 (YNGYSVPGLT…GIPLYEYFDN (129 aa)).

The protein belongs to the ferric reductase (FRE) family. AIM14 subfamily.

Its subcellular location is the membrane. In terms of biological role, probable cell surface metalloreductase. May be involved in iron or copper homeostasis. This chain is Probable metalloreductase AIM14 (AIM14), found in Clavispora lusitaniae (strain ATCC 42720) (Yeast).